Reading from the N-terminus, the 38-residue chain is Large ribosomal subunit protein bL36 (38 aa).

The protein belongs to the bacterial ribosomal protein bL36 family.

This Flavobacterium psychrophilum (strain ATCC 49511 / DSM 21280 / CIP 103535 / JIP02/86) protein is Large ribosomal subunit protein bL36.